The sequence spans 568 residues: Light-independent protochlorophyllide reductase subunit B (568 aa).

Asp-36 is a [4Fe-4S] cluster binding site. The active-site Proton donor is Asp-293. A substrate-binding site is contributed by 437–438; sequence GM. The interval 476–517 is disordered; it reads ANGHPEAGVSVGAAEPSAAPSRSVVTEESNRATTPSSSTVHP. Polar residues predominate over residues 498–515; that stretch reads SVVTEESNRATTPSSSTV.

Belongs to the ChlB/BchB/BchZ family. As to quaternary structure, protochlorophyllide reductase is composed of three subunits; BchL, BchN and BchB. Forms a heterotetramer of two BchB and two BchN subunits. It depends on [4Fe-4S] cluster as a cofactor.

The enzyme catalyses chlorophyllide a + oxidized 2[4Fe-4S]-[ferredoxin] + 2 ADP + 2 phosphate = protochlorophyllide a + reduced 2[4Fe-4S]-[ferredoxin] + 2 ATP + 2 H2O. Its pathway is porphyrin-containing compound metabolism; bacteriochlorophyll biosynthesis (light-independent). In terms of biological role, component of the dark-operative protochlorophyllide reductase (DPOR) that uses Mg-ATP and reduced ferredoxin to reduce ring D of protochlorophyllide (Pchlide) to form chlorophyllide a (Chlide). This reaction is light-independent. The NB-protein (BchN-BchB) is the catalytic component of the complex. The polypeptide is Light-independent protochlorophyllide reductase subunit B (Roseiflexus sp. (strain RS-1)).